We begin with the raw amino-acid sequence, 155 residues long: Large ribosomal subunit protein uL22 (155 aa).

It belongs to the universal ribosomal protein uL22 family. In terms of assembly, part of the 50S ribosomal subunit.

In terms of biological role, this protein binds specifically to 23S rRNA. It makes multiple contacts with different domains of the 23S rRNA in the assembled 50S subunit and ribosome. Functionally, the globular domain of the protein is located near the polypeptide exit tunnel on the outside of the subunit, while an extended beta-hairpin is found that lines the wall of the exit tunnel in the center of the 70S ribosome. This is Large ribosomal subunit protein uL22 from Pyrococcus horikoshii (strain ATCC 700860 / DSM 12428 / JCM 9974 / NBRC 100139 / OT-3).